Reading from the N-terminus, the 244-residue chain is Protein A47 (244 aa).

It belongs to the orthopoxvirus A47 protein family.

The chain is Protein A47 from Homo sapiens (Human).